The primary structure comprises 469 residues: ATP synthase subunit beta (469 aa).

153–160 (GGAGVGKT) provides a ligand contact to ATP.

Belongs to the ATPase alpha/beta chains family. As to quaternary structure, F-type ATPases have 2 components, CF(1) - the catalytic core - and CF(0) - the membrane proton channel. CF(1) has five subunits: alpha(3), beta(3), gamma(1), delta(1), epsilon(1). CF(0) has three main subunits: a(1), b(2) and c(9-12). The alpha and beta chains form an alternating ring which encloses part of the gamma chain. CF(1) is attached to CF(0) by a central stalk formed by the gamma and epsilon chains, while a peripheral stalk is formed by the delta and b chains.

It is found in the cell membrane. The catalysed reaction is ATP + H2O + 4 H(+)(in) = ADP + phosphate + 5 H(+)(out). In terms of biological role, produces ATP from ADP in the presence of a proton gradient across the membrane. The catalytic sites are hosted primarily by the beta subunits. The polypeptide is ATP synthase subunit beta (Pediococcus pentosaceus (strain ATCC 25745 / CCUG 21536 / LMG 10740 / 183-1w)).